A 271-amino-acid chain; its full sequence is Co-chaperone protein DjlA (271 aa).

At 1–6 (MQYWGK) the chain is on the periplasmic side. The helical transmembrane segment at 7 to 31 (IIGVAVALIMGGGFWGVVLGLLIGH) threads the bilayer. The Cytoplasmic portion of the chain corresponds to 32-271 (MFDKARSRKM…ELIKQQKGFK (240 aa)). The J domain maps to 205–271 (DACNVLGVKP…ELIKQQKGFK (67 aa)).

In terms of assembly, homodimer.

Its subcellular location is the cell inner membrane. Regulatory DnaK co-chaperone. Direct interaction between DnaK and DjlA is needed for the induction of the wcaABCDE operon, involved in the synthesis of a colanic acid polysaccharide capsule, possibly through activation of the RcsB/RcsC phosphotransfer signaling pathway. The colanic acid capsule may help the bacterium survive conditions outside the host. The chain is Co-chaperone protein DjlA from Escherichia coli O6:H1 (strain CFT073 / ATCC 700928 / UPEC).